We begin with the raw amino-acid sequence, 643 residues long: Melanoma-associated antigen C3 (643 aa).

MAGE domains are found at residues 184–384 and 456–643; these read LDEK…AAGM and LDEK…FCPE. The segment at 347 to 421 is disordered; that stretch reads NPQGLAGHRQ…PQSPLDSCSS (75 aa). The segment covering 354 to 363 has biased composition (basic and acidic residues); that stretch reads HRQEDGRRGL. Residues 383-414 show a composition bias toward pro residues; the sequence is GMPPLPQSPPEIPPQGPPKISPQGPPQSPPQS. Residues T478, T484, and T485 each carry the phosphothreonine modification.

As to expression, expressed in testis. Not expressed in other normal tissues, but is expressed in tumors of different histological origins.

In Homo sapiens (Human), this protein is Melanoma-associated antigen C3 (MAGEC3).